Consider the following 148-residue polypeptide: MNRSELNDIIKNIVEDNGCDLYDIELSEEGGHKYFRVYITKPGGVSLNDCAKINNLISPIFDIEDPVEGKYFLEVSSPGLERKLTKPEHFEKSIGEKVKVTTNDGTKLKGELKSFIDNVAEIGKEKVNFDDIKKAKTYIEWNTYKYEE.

It belongs to the RimP family.

Its subcellular location is the cytoplasm. In terms of biological role, required for maturation of 30S ribosomal subunits. The chain is Ribosome maturation factor RimP from Nautilia profundicola (strain ATCC BAA-1463 / DSM 18972 / AmH).